The chain runs to 199 residues: Large ribosomal subunit protein uL18 (199 aa).

Belongs to the universal ribosomal protein uL18 family. In terms of assembly, part of the 50S ribosomal subunit. Contacts the 5S and 23S rRNAs.

Functionally, this is one of the proteins that bind and probably mediate the attachment of the 5S RNA into the large ribosomal subunit, where it forms part of the central protuberance. The protein is Large ribosomal subunit protein uL18 of Saccharolobus solfataricus (strain ATCC 35092 / DSM 1617 / JCM 11322 / P2) (Sulfolobus solfataricus).